The primary structure comprises 209 residues: MGTVHVIEHPLVQHKLTMMRRKDASTNSFRRLANEISALMTYEVLRDIPMQEIDVETPLEFTTGKVIDGKKLVFVSILRAGTGILDGMLTIVPGARVGHIGLYRDPKTLGAVEYYFKMPGDLQERDVVVIDPMLATGNSAVAAVERLKECGPKSIKFVCLLTCPEGVAALHKAHPDVPIYTAAVDRQLDEHGYILPGIGDAGDRLFGTK.

5-phospho-alpha-D-ribose 1-diphosphate is bound by residues Arg79, Arg104, and Asp131–Ser139. Uracil contacts are provided by residues Ile194 and Gly199–Ala201. Asp200 is a binding site for 5-phospho-alpha-D-ribose 1-diphosphate.

This sequence belongs to the UPRTase family. Mg(2+) serves as cofactor.

It carries out the reaction UMP + diphosphate = 5-phospho-alpha-D-ribose 1-diphosphate + uracil. The protein operates within pyrimidine metabolism; UMP biosynthesis via salvage pathway; UMP from uracil: step 1/1. Allosterically activated by GTP. Its function is as follows. Catalyzes the conversion of uracil and 5-phospho-alpha-D-ribose 1-diphosphate (PRPP) to UMP and diphosphate. This is Uracil phosphoribosyltransferase from Rhodococcus jostii (strain RHA1).